The sequence spans 318 residues: Protein FAM228A (318 aa).

The segment at Ser-259–Asp-297 is disordered.

The protein belongs to the FAM228 family.

This Bos taurus (Bovine) protein is Protein FAM228A (FAM228A).